A 245-amino-acid polypeptide reads, in one-letter code: Ubiquinone/menaquinone biosynthesis C-methyltransferase UbiE (245 aa).

Residues Thr-71, Asp-92, and Asp-118–Ala-119 contribute to the S-adenosyl-L-methionine site.

This sequence belongs to the class I-like SAM-binding methyltransferase superfamily. MenG/UbiE family.

The catalysed reaction is a 2-demethylmenaquinol + S-adenosyl-L-methionine = a menaquinol + S-adenosyl-L-homocysteine + H(+). It carries out the reaction a 2-methoxy-6-(all-trans-polyprenyl)benzene-1,4-diol + S-adenosyl-L-methionine = a 5-methoxy-2-methyl-3-(all-trans-polyprenyl)benzene-1,4-diol + S-adenosyl-L-homocysteine + H(+). It participates in quinol/quinone metabolism; menaquinone biosynthesis; menaquinol from 1,4-dihydroxy-2-naphthoate: step 2/2. The protein operates within cofactor biosynthesis; ubiquinone biosynthesis. Its function is as follows. Methyltransferase required for the conversion of demethylmenaquinol (DMKH2) to menaquinol (MKH2) and the conversion of 2-polyprenyl-6-methoxy-1,4-benzoquinol (DDMQH2) to 2-polyprenyl-3-methyl-6-methoxy-1,4-benzoquinol (DMQH2). This is Ubiquinone/menaquinone biosynthesis C-methyltransferase UbiE from Neisseria meningitidis serogroup C (strain 053442).